We begin with the raw amino-acid sequence, 587 residues long: Thioredoxin domain-containing protein 3 (587 aa).

The region spanning 2–119 (ASKKREVQLQ…VIALIDEEKK (118 aa)) is the Thioredoxin domain. A disulfide bond links cysteine 39 and cysteine 42. NDK regions lie at residues 157–255 (MAVI…PLEE), 313–453 (VQRT…STLA), and 454–587 (LIKP…NFEN).

In the C-terminal section; belongs to the NDK family. As to quaternary structure, monomer. In terms of tissue distribution, testis-specific.

It is found in the cytoplasm. In terms of biological role, probably required during the final stages of sperm tail maturation in the testis and/or epididymis, where extensive disulfide bonding of fibrous sheath (FS) proteins occurs. In vitro, it has neither nucleoside diphosphate kinase (NDPK) activity nor reducing activity on disulfide bonds. Exhibits a 3'-5' exonuclease activity with a preference for single-stranded DNA, suggesting roles in DNA proofreading and repair. The protein is Thioredoxin domain-containing protein 3 (Nme8) of Rattus norvegicus (Rat).